We begin with the raw amino-acid sequence, 187 residues long: Guanylate kinase (187 aa).

The Guanylate kinase-like domain occupies 5 to 183; sequence GRLTVLTGPS…ALKQLETHMQ (179 aa). ATP is bound at residue 12–19; it reads GPSGVGKG.

This sequence belongs to the guanylate kinase family.

Its subcellular location is the cytoplasm. It carries out the reaction GMP + ATP = GDP + ADP. It catalyses the reaction dZMP + ATP = dZDP + ADP. It functions in the pathway purine metabolism. Essential for recycling GMP and indirectly, cGMP. In terms of biological role, (Microbial infection) Catalyzes the phosphorylation of dZMP to dZDP, when the bacterium is infected by a phage that produces the substrate for the synthesis of dZTP (2- amino-2'-deoxyadenosine 5'-triphosphate), which is then used by the phage as a DNA polymerase substrate. This Synechococcus sp. (strain CC9902) protein is Guanylate kinase.